Here is a 403-residue protein sequence, read N- to C-terminus: Histidine decarboxylase (403 aa).

Residue histidine 120 participates in substrate binding. The residue at position 233 (lysine 233) is an N6-(pyridoxal phosphate)lysine.

Belongs to the group II decarboxylase family. As to quaternary structure, homotetramer. It depends on pyridoxal 5'-phosphate as a cofactor.

The enzyme catalyses L-histidine + H(+) = histamine + CO2. The protein is Histidine decarboxylase of Pseudomonas entomophila (strain L48).